The chain runs to 381 residues: tRNA pseudouridine synthase D (381 aa).

Asp-81 serves as the catalytic Nucleophile. The region spanning 160–335 (GMPNYFGSQR…TLGSRRFFWV (176 aa)) is the TRUD domain.

This sequence belongs to the pseudouridine synthase TruD family.

It catalyses the reaction uridine(13) in tRNA = pseudouridine(13) in tRNA. Its function is as follows. Responsible for synthesis of pseudouridine from uracil-13 in transfer RNAs. This Helicobacter pylori (strain J99 / ATCC 700824) (Campylobacter pylori J99) protein is tRNA pseudouridine synthase D.